The following is a 453-amino-acid chain: o-phthalyl amidase (453 aa).

As to quaternary structure, monomer. The N-terminus is blocked.

The catalysed reaction is a phtalamide + H2O = phthalate + a primary amine. With respect to regulation, inhibited by iodoacetate, p-hydroxymercuric benzoate and copper ions. Catalyzes the removal of the phthalyl group from phthalyl amides generating phthalate and an amine. The enzyme has a broad substrate specificity and hydrolyzes phthalylated amino acids, peptides, beta-lactams, aromatic and aliphatic amines; substitutions allowed on the phthalyl group include 6-F, 6-NH(2), 3-OH, and a nitrogen in the aromatic ring ortho to the carboxy group attached to the amine. This is o-phthalyl amidase from Xanthobacter agilis.